A 218-amino-acid polypeptide reads, in one-letter code: Large ribosomal subunit protein uL3 (218 aa).

2 disordered regions span residues 128-167 (FSRG…RMGG) and 199-218 (SLLN…QGGK).

It belongs to the universal ribosomal protein uL3 family. Part of the 50S ribosomal subunit. Forms a cluster with proteins L14 and L19.

Functionally, one of the primary rRNA binding proteins, it binds directly near the 3'-end of the 23S rRNA, where it nucleates assembly of the 50S subunit. The sequence is that of Large ribosomal subunit protein uL3 from Prochlorococcus marinus (strain NATL2A).